A 128-amino-acid chain; its full sequence is Probable 4-amino-4-deoxy-L-arabinose-phosphoundecaprenol flippase subunit ArnF (128 aa).

The Cytoplasmic segment spans residues 1 to 2 (MG). The chain crosses the membrane as a helical span at residues 3–23 (LMWGLFSVIIASAAQLSLGFA). Residues 24–32 (ASHLPPMTH) are Periplasmic-facing. The helical transmembrane segment at 33–53 (LWDFIAALLAFGLDARILLLG) threads the bilayer. Residues 54 to 76 (LQGYLLSVFCWYKTLHKLALSKA) lie on the Cytoplasmic side of the membrane. A helical membrane pass occupies residues 77–97 (YALLSMSYVLVWIASMVLPGW). The Periplasmic segment spans residues 98 to 100 (EGT). A helical membrane pass occupies residues 101–121 (FSLKALLGVACIMSGLMLIFL). Over 122–128 (PTTKQRY) the chain is Cytoplasmic.

The protein belongs to the ArnF family. As to quaternary structure, heterodimer of ArnE and ArnF.

It is found in the cell inner membrane. It functions in the pathway bacterial outer membrane biogenesis; lipopolysaccharide biosynthesis. Its function is as follows. Translocates 4-amino-4-deoxy-L-arabinose-phosphoundecaprenol (alpha-L-Ara4N-phosphoundecaprenol) from the cytoplasmic to the periplasmic side of the inner membrane. The protein is Probable 4-amino-4-deoxy-L-arabinose-phosphoundecaprenol flippase subunit ArnF of Escherichia coli O7:K1 (strain IAI39 / ExPEC).